A 933-amino-acid polypeptide reads, in one-letter code: DNA repair-scaffolding protein (933 aa).

Disordered regions lie at residues 1-34 (MSGARRPGTSKRKRNWHIEHPSFREERSQQLRRG), 67-174 (SEKT…KGTL), and 205-224 (YSSDSEKEEDPEHSLFIDSE). 3 stretches are compositionally biased toward basic and acidic residues: residues 16–29 (WHIEHPSFREERSQ), 71–87 (GITEKHLELSPKPKTET), and 119–132 (RDGRHGPRADRLGD). The span at 138–148 (PEDEDIEDELQ) shows a compositional bias: acidic residues. The segment at 175–469 (DISDCDSCAS…GTGWTHGHEK (295 aa)) is necessary for interaction with RAD51. A compositionally biased stretch (basic and acidic residues) spans 214 to 224 (DPEHSLFIDSE).

Found in a complex, at least composed of BLM, RAD51 and SPIDR; the complex formation is mediated by SPIDR. Interacts (via C-terminal region) with BLM; the interaction is direct. Interacts with RAD51; the interaction is direct. Interacts (via the C-terminal region) with FIGNL1 (via N-terminal one-half region); the interaction is direct.

The protein localises to the nucleus. In terms of biological role, plays a role in DNA double-strand break (DBS) repair via homologous recombination (HR). Serves as a scaffolding protein that helps to promote the recruitment of DNA-processing enzymes like the helicase BLM and recombinase RAD51 to site of DNA damage, and hence contributes to maintain genomic integrity. The chain is DNA repair-scaffolding protein (Spidr) from Mus musculus (Mouse).